The following is a 478-amino-acid chain: MATYVSPCFTPSDSRLLTVLRKNVLPENHLGRLNSIRTIDSKKNRVVVAAQKSESSPIRNSPRHYQSQAQDPFLNLHPEISMLRGEGTSTIVNPRKETSSGPVVEDFEEPSAPSNYNEARIKVIGVGGGGSNAVNRMIESEMSGVEFWIVNTDIQAMRMSPVLPDNRLQIGKELTRGLGAGGNPEIGMNAARESKEVIEEALYGSDMVFVTAGMGGGTGTGAAPVIAGIAKAMGILTVGIATTPFSFEGRRRTVQAQEGLASLRDNVDTLIVIPNDKLLTAVSQSTPVTEAFNLADDILRQGVRGISDIITIPGLVNVDFADVRAIMANAGSSLMGIGTATGKSRARDAALNAIQSPLLDIGIERATGIVWNITGGSDLTLFEVNAAAEVIYDLVDPTANLIFGAVVDPALSGQVSITLIATGFKRQEEGEGRTVQMVQADAASVGATRRPSSSFRESGSVEIPEFLKKKGSSRYPRV.

A disordered region spans residues 86 to 112; sequence EGTSTIVNPRKETSSGPVVEDFEEPSA. 128 to 132 contacts GTP; sequence GGGSN. Ser-143 is modified (phosphoserine; by PGK1). GTP is bound by residues 217 to 219, Glu-248, and Arg-252; that span reads GTG. Position 286 is a phosphothreonine; by PGK1 (Thr-286). Asp-296 is a binding site for GTP.

The protein belongs to the FtsZ family. In terms of assembly, aggregates to form a contractile ring-like structure; contraction of the ring was accompanied by an increase in the filament turnover rate. Self-interacts and binds to FTSZ1 in heteromers to form two morphologically distinct types of filaments, termed type-I (smooth filaments) and -II (rough filaments), in a GTP-dependent manner; the GDP-induced disassembly is inhibited by ARC6. Interacts (via C-terminus) with ARC6; this interaction enables ARC3 binding to FTSZ2. Part of a complex made of ARC3, ARC6, FTSZ1 and FTSZ2. Binds to MCD1 in an ARC6-dependent manner. Binds to CDP1/PARC6. Part of a complex made of CDP1/PARC6, ARC3 and FtsZ proteins in the middle of the plastid; this complex enhances the dynamics of Z rings during chloroplast division. Binds to PGK1. Filaments containing FTSZ2-1 are stabilized when in complex with GTP but destabilized after conversion of GTP into GDP; ARC6 conteracts this destabilisation by preventing the dissociation of GDP-bound FTSZ2 molecules thus inhibiting filament disassembly whereas ARC3 promotes GTPase activity thus accelerating the conversion of GTP into GDP and triggering FtsZ2 filaments disassembly. Post-translationally, phosphorylation at Ser-143 is necessary for interactions with ARC3, ARC6, FTSZ1 and FTSZ2-2. Phosphorylations at Ser-143 and Thr-286 are required for the formation of contractile ring at the chloroplast midpoint.

It localises to the plastid. The protein localises to the chloroplast stroma. The protein resides in the chloroplast thylakoid membrane. With respect to regulation, GTPase activity is enhanced by ARC3. In terms of biological role, exhibits GTPase activity which converts GTP ligands to GDP. Component of the plastid division machinery consisting in a binary fission accomplished by the simultaneous constriction of the FtsZ ring on the stromal side of the inner envelope membrane, and the ARC5 ring on the cytosolic side of the outer envelope membrane. Required for plastid division in a dose-dependent manner. In the vegetative shoot apex, at the shoot apical meristem (SAM), where the proplastid-to-chloroplast transition takes place, major contributor of plastid division in the L1 and L3 layers and contributes equally with FTSZ1 in the L2 layer. This is Cell division protein FtsZ homolog 2-1, chloroplastic from Arabidopsis thaliana (Mouse-ear cress).